We begin with the raw amino-acid sequence, 434 residues long: Trigger factor (434 aa).

Positions 160 to 245 (GDKVKMNFVG…LTEVLAANLP (86 aa)) constitute a PPIase FKBP-type domain.

This sequence belongs to the FKBP-type PPIase family. Tig subfamily.

Its subcellular location is the cytoplasm. The catalysed reaction is [protein]-peptidylproline (omega=180) = [protein]-peptidylproline (omega=0). Functionally, involved in protein export. Acts as a chaperone by maintaining the newly synthesized protein in an open conformation. Functions as a peptidyl-prolyl cis-trans isomerase. This chain is Trigger factor, found in Shewanella sp. (strain ANA-3).